The sequence spans 23 residues: Caerin-4.3 (23 aa).

Expressed by the skin parotoid and/or rostral glands.

It localises to the secreted. Its function is as follows. Antibacterial peptide, that adopts an alpha helical conformation which can disrupt bacterial membranes. Each caerin displays a different antimicrobial specificity. This Ranoidea caerulea (Green tree frog) protein is Caerin-4.3.